We begin with the raw amino-acid sequence, 928 residues long: BCAS3 microtubule associated cell migration factor (928 aa).

Met1 is subject to N-acetylmethionine. Lys215 participates in a covalent cross-link: Glycyl lysine isopeptide (Lys-Gly) (interchain with G-Cter in SUMO1); alternate. Lys215 participates in a covalent cross-link: Glycyl lysine isopeptide (Lys-Gly) (interchain with G-Cter in SUMO2); alternate. Required for recruitment to preautophagosomal structure in response to mitophagy stretches follow at residues 254 to 312 and 437 to 560; these read RGGA…SRRS and YGGQ…IKAP. Ser461, Ser480, and Ser488 each carry phosphoserine. Disordered stretches follow at residues 472–518 and 795–816; these read TSKQ…PRLS and VRSD…RGVS. 2 stretches are compositionally biased toward low complexity: residues 480 to 494 and 505 to 514; these read SPVP…GSPL and NNFTNNNPGN. Phosphoserine occurs at positions 838, 886, and 898. Residues 868-928 form a disordered region; the sequence is ESPSRDVVGS…PLSLFPTGFP (61 aa). A compositionally biased stretch (low complexity) spans 887-901; that stretch reads IETLSNSSGSTSGSI.

This sequence belongs to the BCAS3 family. As to quaternary structure, interacts with histone H3, ESR1, KAT2B and PELP1; the interactions occur in a estrogen-dependent manner. Interacts with beta-tubulin and VIM. Interacts (via C-terminal) with PHAF1; the interaction is requrired for the association with the phagophore. As to expression, expressed in blood islands and yolk sac blood islands (at protein level). Highly expressed in mammary tumors. Expressed in eostrogen-induced epithelial cells of mammary glands. Expressed in brain, heart, kidney, lung, liver and spleen. Expressed in embryonic stem cells, embryoid bodies, endothelial cells and fibroblasts.

The protein localises to the nucleus. It is found in the cytoplasm. The protein resides in the cytoskeleton. Its subcellular location is the preautophagosomal structure. Its function is as follows. Functions synergistically with PELP1 as a transcriptional coactivator of estrogen receptor-responsive genes. Stimulates histone acetyltransferase activity. Binds to chromatin. Plays a role in angiogenesis. Participates in the regulation of cell polarity and directional endothelial cell migration by mediating both the activation and recruitment of CDC42 and the reorganization of the actin cytoskeleton at the cell leading edge. Promotes filipodia formation. Plays a regulatory role in autophagic activity. In complex with PHAF1, associates with the preautophagosomal structure during both non-selective and selective autophagy. Probably binds phosphatidylinositol 3-phosphate (PtdIns3P) which would mediate the recruitment preautophagosomal structures. This chain is BCAS3 microtubule associated cell migration factor, found in Mus musculus (Mouse).